A 137-amino-acid chain; its full sequence is Large ribosomal subunit protein uL16c (137 aa).

It belongs to the universal ribosomal protein uL16 family. As to quaternary structure, part of the 50S ribosomal subunit.

The protein localises to the plastid. Its subcellular location is the chloroplast. This Bigelowiella natans (Pedinomonas minutissima) protein is Large ribosomal subunit protein uL16c.